The primary structure comprises 394 residues: Actin-related protein 2 (394 aa).

An N-acetylmethionine modification is found at Met-1. Residues 160-162 and 214-218 each bind ATP; these read GDG and RMIKE. Position 299 is an N6-acetyllysine (Lys-299). 305–310 serves as a coordination point for ATP; the sequence is GGSTMY. N6-acetyllysine is present on Lys-322.

Belongs to the actin family. ARP2 subfamily. Component of the Arp2/3 complex composed of ACTR2/ARP2, ACTR3/ARP3, ARPC1B/p41-ARC, ARPC2/p34-ARC, ARPC3/p21-ARC, ARPC4/p20-ARC and ARPC5/p16-ARC.

It is found in the cytoplasm. The protein resides in the cytoskeleton. Its subcellular location is the cell projection. It localises to the nucleus. In terms of biological role, ATP-binding component of the Arp2/3 complex, a multiprotein complex that mediates actin polymerization upon stimulation by nucleation-promoting factor (NPF). The Arp2/3 complex mediates the formation of branched actin networks in the cytoplasm, providing the force for cell motility. Seems to contact the pointed end of the daughter actin filament. In addition to its role in the cytoplasmic cytoskeleton, the Arp2/3 complex also promotes actin polymerization in the nucleus, thereby regulating gene transcription and repair of damaged DNA. The Arp2/3 complex promotes homologous recombination (HR) repair in response to DNA damage by promoting nuclear actin polymerization, leading to drive motility of double-strand breaks (DSBs). The sequence is that of Actin-related protein 2 (Actr2) from Rattus norvegicus (Rat).